Consider the following 89-residue polypeptide: Dynein light chain 1, cytoplasmic (89 aa).

Belongs to the dynein light chain family. Interacts with mett-10; the interaction is direct, and is required for the nuclear localization of mett-10. Component of a dynein-regulating complex composed of at least bicd-1, dlc-1 and egal-1. Interacts with egal-1 and unc-83. Interacts with fbf-2. Broadly expressed in tissues including the intestine, body wall muscles, germs cells, oocytes, the rectal valve and cells in the head.

Its subcellular location is the cytoplasm. It is found in the cytoskeleton. The protein localises to the nucleus envelope. The protein resides in the cytoplasmic granule. In terms of biological role, acts as a non-catalytic accessory component of a dynein complex. Part of a complex with bicd-1 and egal-1, which is recruited to the nuclear envelope by unc-83, where in turn, it recruits dynein to the nuclear surface and regulates nuclear migrations in hypodermal precursor cells. Probably within a dynein motor complex, plays a role in the cell fate specification of the germline and oogenesis. In particular, it inhibits germ cell proliferation. Regulates the function and localization of the RNA-binding protein fbf-2 in the germline. Plays a role in mitotic and meiotic processes. Involved in the pairing of homologous chromosomes. Independently of its dynein-mediated functions, plays a role in germ cell apoptosis. The polypeptide is Dynein light chain 1, cytoplasmic (Caenorhabditis elegans).